We begin with the raw amino-acid sequence, 247 residues long: Type II restriction enzyme SmaI (247 aa).

It depends on Mg(2+) as a cofactor. K(+) serves as cofactor.

It catalyses the reaction Endonucleolytic cleavage of DNA to give specific double-stranded fragments with terminal 5'-phosphates.. Its function is as follows. A P subtype restriction enzyme that recognizes the double-stranded sequence 5'-CCCGGG-3' and cleaves after C-3. In Serratia marcescens, this protein is Type II restriction enzyme SmaI (smaIR).